A 464-amino-acid chain; its full sequence is E3 ubiquitin-protein ligase MYLIP-B (464 aa).

The region spanning 1 to 279 is the FERM domain; the sequence is MLCHITRPDS…EIHAFYRCDT (279 aa). The RING-type zinc finger occupies 381–416; it reads CALCCEQEISAAFCPCGHMFCCYNCASQLQCCPVCR.

Interacts with anxa5.

The protein resides in the cytoplasm. Its subcellular location is the cytosol. The enzyme catalyses S-ubiquitinyl-[E2 ubiquitin-conjugating enzyme]-L-cysteine + [acceptor protein]-L-lysine = [E2 ubiquitin-conjugating enzyme]-L-cysteine + N(6)-ubiquitinyl-[acceptor protein]-L-lysine.. It functions in the pathway protein modification; protein ubiquitination. In terms of biological role, E3 ubiquitin-protein ligase that mediates ubiquitination and subsequent proteasomal degradation of myosin regulatory light chain (MRLC). Regulates cell movements during gastrulation by acting downstream of fz7 to antagonize the frizzled-signaling pathway. The polypeptide is E3 ubiquitin-protein ligase MYLIP-B (Danio rerio (Zebrafish)).